A 322-amino-acid chain; its full sequence is Acetyl-coenzyme A carboxylase carboxyl transferase subunit alpha (322 aa).

Residues 32–293 (DISEEIARLE…KRALQDALRQ (262 aa)) form the CoA carboxyltransferase C-terminal domain.

The protein belongs to the AccA family. In terms of assembly, acetyl-CoA carboxylase is a heterohexamer composed of biotin carboxyl carrier protein (AccB), biotin carboxylase (AccC) and two subunits each of ACCase subunit alpha (AccA) and ACCase subunit beta (AccD).

Its subcellular location is the cytoplasm. The catalysed reaction is N(6)-carboxybiotinyl-L-lysyl-[protein] + acetyl-CoA = N(6)-biotinyl-L-lysyl-[protein] + malonyl-CoA. The protein operates within lipid metabolism; malonyl-CoA biosynthesis; malonyl-CoA from acetyl-CoA: step 1/1. Its function is as follows. Component of the acetyl coenzyme A carboxylase (ACC) complex. First, biotin carboxylase catalyzes the carboxylation of biotin on its carrier protein (BCCP) and then the CO(2) group is transferred by the carboxyltransferase to acetyl-CoA to form malonyl-CoA. This is Acetyl-coenzyme A carboxylase carboxyl transferase subunit alpha from Aromatoleum aromaticum (strain DSM 19018 / LMG 30748 / EbN1) (Azoarcus sp. (strain EbN1)).